A 141-amino-acid chain; its full sequence is Large ribosomal subunit protein bL17 (141 aa).

The protein belongs to the bacterial ribosomal protein bL17 family. Part of the 50S ribosomal subunit. Contacts protein L32.

The polypeptide is Large ribosomal subunit protein bL17 (Chlamydia trachomatis serovar D (strain ATCC VR-885 / DSM 19411 / UW-3/Cx)).